The primary structure comprises 335 residues: Protein-glutamate methylesterase/protein-glutamine glutaminase 3 (335 aa).

Residues 2 to 119 (RIGIVNDMPL…GNPQTAAAPL (118 aa)) form the Response regulatory domain. D53 is subject to 4-aspartylphosphate. The region spanning 144–335 (PKAGGARQRL…IAPRLAEVFD (192 aa)) is the CheB-type methylesterase domain. Active-site residues include S159, H186, and D279.

It belongs to the CheB family. Post-translationally, phosphorylated by CheA. Phosphorylation of the N-terminal regulatory domain activates the methylesterase activity.

The protein resides in the cytoplasm. The catalysed reaction is [protein]-L-glutamate 5-O-methyl ester + H2O = L-glutamyl-[protein] + methanol + H(+). It carries out the reaction L-glutaminyl-[protein] + H2O = L-glutamyl-[protein] + NH4(+). In terms of biological role, involved in chemotaxis. Part of a chemotaxis signal transduction system that modulates chemotaxis in response to various stimuli. Catalyzes the demethylation of specific methylglutamate residues introduced into the chemoreceptors (methyl-accepting chemotaxis proteins or MCP) by CheR. Also mediates the irreversible deamidation of specific glutamine residues to glutamic acid. This Pseudomonas aeruginosa (strain ATCC 15692 / DSM 22644 / CIP 104116 / JCM 14847 / LMG 12228 / 1C / PRS 101 / PAO1) protein is Protein-glutamate methylesterase/protein-glutamine glutaminase 3.